Reading from the N-terminus, the 229-residue chain is Lipoprotein-releasing system ATP-binding protein LolD (229 aa).

Residues 7–229 (LKCKNVTKTY…KNGKLYKKNL (223 aa)) enclose the ABC transporter domain. 43–50 (GDSGSGKS) contacts ATP.

This sequence belongs to the ABC transporter superfamily. Lipoprotein translocase (TC 3.A.1.125) family. As to quaternary structure, the complex is composed of two ATP-binding proteins (LolD) and two transmembrane proteins (LolC and LolE).

The protein localises to the cell membrane. Its function is as follows. Part of the ABC transporter complex LolCDE involved in the translocation of lipoproteins, in an ATP-dependent manner. The chain is Lipoprotein-releasing system ATP-binding protein LolD from Wigglesworthia glossinidia brevipalpis.